Consider the following 315-residue polypeptide: tRNA dimethylallyltransferase (315 aa).

ATP is bound at residue 14–21; it reads GATATGKS. Substrate is bound at residue 16–21; that stretch reads TATGKS. Residues 39–42 form an interaction with substrate tRNA region; it reads DSRQ.

This sequence belongs to the IPP transferase family. As to quaternary structure, monomer. It depends on Mg(2+) as a cofactor.

It catalyses the reaction adenosine(37) in tRNA + dimethylallyl diphosphate = N(6)-dimethylallyladenosine(37) in tRNA + diphosphate. Functionally, catalyzes the transfer of a dimethylallyl group onto the adenine at position 37 in tRNAs that read codons beginning with uridine, leading to the formation of N6-(dimethylallyl)adenosine (i(6)A). The protein is tRNA dimethylallyltransferase of Microcystis aeruginosa (strain NIES-843 / IAM M-2473).